Consider the following 49-residue polypeptide: Large ribosomal subunit protein bL33B (49 aa).

Belongs to the bacterial ribosomal protein bL33 family.

In Lactobacillus helveticus (strain DPC 4571), this protein is Large ribosomal subunit protein bL33B.